A 283-amino-acid polypeptide reads, in one-letter code: Orotidine 5'-phosphate decarboxylase (283 aa).

Catalysis depends on lysine 97, which acts as the Proton donor.

It belongs to the OMP decarboxylase family. Type 2 subfamily.

It catalyses the reaction orotidine 5'-phosphate + H(+) = UMP + CO2. Its pathway is pyrimidine metabolism; UMP biosynthesis via de novo pathway; UMP from orotate: step 2/2. The sequence is that of Orotidine 5'-phosphate decarboxylase from Clostridium botulinum (strain Kyoto / Type A2).